Reading from the N-terminus, the 36-residue chain is Pancreatic polypeptide (36 aa).

Tyrosine 36 is modified (tyrosine amide).

This sequence belongs to the NPY family.

It localises to the secreted. Its function is as follows. Hormone secreted by pancreatic cells that acts as a regulator of pancreatic and gastrointestinal functions probably by signaling through the G protein-coupled receptor NPY4R2. The chain is Pancreatic polypeptide (PPY) from Macaca mulatta (Rhesus macaque).